The chain runs to 331 residues: MEIINGPVLPRYAAPATGALTSDAKISGQLLRRVHLRRRACGLQGDHYRAARRFFGFPSERHARSGWVWPVCCSYGSSSDGDGAAAADYDASGEEFVNSSVMEAVELRSVSDGFVIKMRDGKNLRCVQNNPRVLRLRDSAPHHAIVLKMEDGSDLLLPIIVMETPSIMLLAALRNIRIPRPTIYNVVKEMTERMGYAVRLVRITEMVHDAYYSRLYLAKIGNEEETISLDLKPSDAINIAFRCKVPIQVNRRIAYNNGLKVVQPTPSESYVSSDQFQCTRLDRPDDQPCFEAQEFDLVRNMLVAAVEERYKDAAQYRDQLFMFRAKKKNMI.

In terms of domain architecture, BFN spans 126 to 261; the sequence is CVQNNPRVLR…RIAYNNGLKV (136 aa). The region spanning 291–326 is the UVR domain; that stretch reads EAQEFDLVRNMLVAAVEERYKDAAQYRDQLFMFRAK.

Belongs to the bifunctional nuclease family.

The protein resides in the nucleus. Its function is as follows. Bifunctional nuclease with both RNase and DNase activities. Involved in basal defense response. Participates in abscisic acid-derived callose deposition following infection by a necrotrophic pathogen. The protein is Bifunctional nuclease 1 (BBD1) of Oryza sativa subsp. indica (Rice).